An 89-amino-acid chain; its full sequence is Small ribosomal subunit protein uS15 (89 aa).

The protein belongs to the universal ribosomal protein uS15 family. In terms of assembly, part of the 30S ribosomal subunit. Forms a bridge to the 50S subunit in the 70S ribosome, contacting the 23S rRNA.

Functionally, one of the primary rRNA binding proteins, it binds directly to 16S rRNA where it helps nucleate assembly of the platform of the 30S subunit by binding and bridging several RNA helices of the 16S rRNA. Its function is as follows. Forms an intersubunit bridge (bridge B4) with the 23S rRNA of the 50S subunit in the ribosome. The sequence is that of Small ribosomal subunit protein uS15 from Bartonella tribocorum (strain CIP 105476 / IBS 506).